A 206-amino-acid chain; its full sequence is Ribosomal RNA large subunit methyltransferase E (206 aa).

Gly-63, Trp-65, Asp-83, Asp-99, and Asp-124 together coordinate S-adenosyl-L-methionine. Lys-164 acts as the Proton acceptor in catalysis.

Belongs to the class I-like SAM-binding methyltransferase superfamily. RNA methyltransferase RlmE family.

Its subcellular location is the cytoplasm. It carries out the reaction uridine(2552) in 23S rRNA + S-adenosyl-L-methionine = 2'-O-methyluridine(2552) in 23S rRNA + S-adenosyl-L-homocysteine + H(+). In terms of biological role, specifically methylates the uridine in position 2552 of 23S rRNA at the 2'-O position of the ribose in the fully assembled 50S ribosomal subunit. This Buchnera aphidicola subsp. Schizaphis graminum (strain Sg) protein is Ribosomal RNA large subunit methyltransferase E.